The primary structure comprises 145 residues: Selenoprotein M (145 aa).

The first 23 residues, 1-23, serve as a signal peptide directing secretion; the sequence is MSLLLPPLALLLLLAALVAPATA. Catalysis depends on nucleophile residues Cys45 and Sec48. A cross-link (cysteinyl-selenocysteine (Cys-Sec)) is located at residues 45-48; it reads CGGU. Sec48 is a non-standard amino acid (selenocysteine).

It belongs to the selenoprotein M/F family. In terms of tissue distribution, widely expressed.

The protein localises to the cytoplasm. The protein resides in the perinuclear region. It is found in the endoplasmic reticulum. It localises to the golgi apparatus. Its function is as follows. May function as a thiol-disulfide oxidoreductase that participates in disulfide bond formation. This is Selenoprotein M from Homo sapiens (Human).